Reading from the N-terminus, the 151-residue chain is Large ribosomal subunit protein uL22 (151 aa).

Belongs to the universal ribosomal protein uL22 family. In terms of assembly, part of the 50S ribosomal subunit.

In terms of biological role, this protein binds specifically to 23S rRNA. It makes multiple contacts with different domains of the 23S rRNA in the assembled 50S subunit and ribosome. Its function is as follows. The globular domain of the protein is located near the polypeptide exit tunnel on the outside of the subunit, while an extended beta-hairpin is found that lines the wall of the exit tunnel in the center of the 70S ribosome. This chain is Large ribosomal subunit protein uL22, found in Methanococcoides burtonii (strain DSM 6242 / NBRC 107633 / OCM 468 / ACE-M).